A 53-amino-acid chain; its full sequence is Sec-independent protein translocase protein TatA (53 aa).

Residues 1–21 traverse the membrane as a helical segment; that stretch reads MGMSLSHLLIVLLIIFVLFGA.

Belongs to the TatA/E family. The Tat system comprises two distinct complexes: a TatABC complex, containing multiple copies of TatA, TatB and TatC subunits, and a separate TatA complex, containing only TatA subunits. Substrates initially bind to the TatABC complex, which probably triggers association of the separate TatA complex to form the active translocon.

Its subcellular location is the cell inner membrane. Its function is as follows. Part of the twin-arginine translocation (Tat) system that transports large folded proteins containing a characteristic twin-arginine motif in their signal peptide across membranes. TatA could form the protein-conducting channel of the Tat system. The protein is Sec-independent protein translocase protein TatA of Rickettsia conorii (strain ATCC VR-613 / Malish 7).